A 383-amino-acid chain; its full sequence is Protein FAM217B (383 aa).

Disordered regions lie at residues 1–70 (MNAG…CQGA), 89–115 (ADED…PPDL), 200–222 (KAKG…KSPG), 232–251 (SKPL…RKKA), 284–325 (QTLE…HIRV), and 338–383 (SCKA…YKLK). Residues 8–43 (NKVQHSKNSSGKRQSKSQVPHASSQPRSSLTAVTQP) show a composition bias toward polar residues. The span at 44–56 (TEEKLKESISPEA) shows a compositional bias: basic and acidic residues. Residues 374–383 (GVKQNTYKLK) are compositionally biased toward polar residues.

The protein belongs to the FAM217 family.

The protein is Protein FAM217B (FAM217B) of Homo sapiens (Human).